We begin with the raw amino-acid sequence, 176 residues long: Prepronociceptin (176 aa).

A signal peptide spans 1-19; sequence MKVLLCDLLLLSLFSSVFS. Propeptides lie at residues 20 to 95 and 169 to 176; these read SCQR…MQHL and TLHQNGNV.

Belongs to the opioid neuropeptide precursor family. In terms of processing, specific enzymatic cleavages at paired basic residues probably yield other active peptides besides nociceptin. The N-terminal domain contains 6 conserved cysteines thought to be involved in disulfide bonding and/or processing. As to expression, predominantly expressed in the brain and spinal cord. Also expressed and secreted by peripheral blood neutrophils following degranulation.

Its subcellular location is the secreted. Functionally, ligand of the opioid receptor-like receptor OPRL1. It may act as a transmitter in the brain by modulating nociceptive and locomotor behavior. May be involved in neuronal differentiation and development. In terms of biological role, blocks nociceptin action in pain transmission by inhibiting nociceptin-induced hyperalgesia and allodynia. Its function is as follows. Has potent analgesic activity. The polypeptide is Prepronociceptin (PNOC) (Homo sapiens (Human)).